Reading from the N-terminus, the 274-residue chain is 2,3,4,5-tetrahydropyridine-2,6-dicarboxylate N-succinyltransferase (274 aa).

Substrate-binding residues include R106 and D143.

The protein belongs to the transferase hexapeptide repeat family. As to quaternary structure, homotrimer.

The protein resides in the cytoplasm. The enzyme catalyses (S)-2,3,4,5-tetrahydrodipicolinate + succinyl-CoA + H2O = (S)-2-succinylamino-6-oxoheptanedioate + CoA. It functions in the pathway amino-acid biosynthesis; L-lysine biosynthesis via DAP pathway; LL-2,6-diaminopimelate from (S)-tetrahydrodipicolinate (succinylase route): step 1/3. In Paracidovorax citrulli (strain AAC00-1) (Acidovorax citrulli), this protein is 2,3,4,5-tetrahydropyridine-2,6-dicarboxylate N-succinyltransferase.